The sequence spans 83 residues: Small ribosomal subunit protein bS16 (83 aa).

It belongs to the bacterial ribosomal protein bS16 family.

This Borrelia turicatae (strain 91E135) protein is Small ribosomal subunit protein bS16.